The chain runs to 765 residues: Myotubularin-related protein 10-A (765 aa).

In terms of domain architecture, Myotubularin phosphatase spans 209-650 (FETYSDWDRE…THIKLWKLCY (442 aa)).

The protein belongs to the protein-tyrosine phosphatase family. Non-receptor class myotubularin subfamily.

This is Myotubularin-related protein 10-A (mtmr10-a) from Xenopus laevis (African clawed frog).